The following is a 273-amino-acid chain: Shikimate dehydrogenase (NADP(+)) (273 aa).

Residues 14–16 and Thr61 each bind shikimate; that span reads SKS. Lys65 (proton acceptor) is an active-site residue. Residue Glu77 participates in NADP(+) binding. 2 residues coordinate shikimate: Asn86 and Asp102. Residues 126-130, 150-155, and Met213 each bind NADP(+); these read GAGGA and NRTYEK. Tyr215 is a shikimate binding site. Gly237 lines the NADP(+) pocket.

The protein belongs to the shikimate dehydrogenase family. As to quaternary structure, homodimer.

The catalysed reaction is shikimate + NADP(+) = 3-dehydroshikimate + NADPH + H(+). The protein operates within metabolic intermediate biosynthesis; chorismate biosynthesis; chorismate from D-erythrose 4-phosphate and phosphoenolpyruvate: step 4/7. Functionally, involved in the biosynthesis of the chorismate, which leads to the biosynthesis of aromatic amino acids. Catalyzes the reversible NADPH linked reduction of 3-dehydroshikimate (DHSA) to yield shikimate (SA). The protein is Shikimate dehydrogenase (NADP(+)) of Aliivibrio fischeri (strain MJ11) (Vibrio fischeri).